Consider the following 75-residue polypeptide: Exodeoxyribonuclease 7 small subunit (75 aa).

This sequence belongs to the XseB family. In terms of assembly, heterooligomer composed of large and small subunits.

The protein localises to the cytoplasm. It catalyses the reaction Exonucleolytic cleavage in either 5'- to 3'- or 3'- to 5'-direction to yield nucleoside 5'-phosphates.. Functionally, bidirectionally degrades single-stranded DNA into large acid-insoluble oligonucleotides, which are then degraded further into small acid-soluble oligonucleotides. The protein is Exodeoxyribonuclease 7 small subunit of Listeria welshimeri serovar 6b (strain ATCC 35897 / DSM 20650 / CCUG 15529 / CIP 8149 / NCTC 11857 / SLCC 5334 / V8).